The sequence spans 68 residues: Large ribosomal subunit protein bL35 (68 aa).

It belongs to the bacterial ribosomal protein bL35 family.

The sequence is that of Large ribosomal subunit protein bL35 from Rickettsia typhi (strain ATCC VR-144 / Wilmington).